The following is an 823-amino-acid chain: DNA mismatch repair protein MutS (823 aa).

Residue 605–612 (GPNMSGKS) participates in ATP binding.

This sequence belongs to the DNA mismatch repair MutS family.

In terms of biological role, this protein is involved in the repair of mismatches in DNA. It is possible that it carries out the mismatch recognition step. This protein has a weak ATPase activity. The protein is DNA mismatch repair protein MutS of Fervidobacterium nodosum (strain ATCC 35602 / DSM 5306 / Rt17-B1).